Here is a 169-residue protein sequence, read N- to C-terminus: S-ribosylhomocysteine lyase (169 aa).

Residues H54, H58, and C129 each coordinate Fe cation.

Belongs to the LuxS family. Homodimer. Fe cation is required as a cofactor.

It catalyses the reaction S-(5-deoxy-D-ribos-5-yl)-L-homocysteine = (S)-4,5-dihydroxypentane-2,3-dione + L-homocysteine. Its function is as follows. Involved in the synthesis of autoinducer 2 (AI-2) which is secreted by bacteria and is used to communicate both the cell density and the metabolic potential of the environment. The regulation of gene expression in response to changes in cell density is called quorum sensing. Catalyzes the transformation of S-ribosylhomocysteine (RHC) to homocysteine (HC) and 4,5-dihydroxy-2,3-pentadione (DPD). The protein is S-ribosylhomocysteine lyase of Actinobacillus pleuropneumoniae serotype 5b (strain L20).